The following is a 163-amino-acid chain: Nucleotide-binding protein AM1_1863 (163 aa).

This sequence belongs to the YajQ family.

Its function is as follows. Nucleotide-binding protein. In Acaryochloris marina (strain MBIC 11017), this protein is Nucleotide-binding protein AM1_1863.